Consider the following 407-residue polypeptide: Peptidase T (407 aa).

A Zn(2+)-binding site is contributed by His81. Asp83 is an active-site residue. Zn(2+) is bound at residue Asp142. Glu176 (proton acceptor) is an active-site residue. Zn(2+) is bound by residues Glu177, Asp199, and His381.

This sequence belongs to the peptidase M20B family. It depends on Zn(2+) as a cofactor.

The protein resides in the cytoplasm. It carries out the reaction Release of the N-terminal residue from a tripeptide.. In terms of biological role, cleaves the N-terminal amino acid of tripeptides. The protein is Peptidase T of Streptococcus pneumoniae (strain P1031).